The sequence spans 235 residues: Probable pyridoxal 5'-phosphate synthase subunit PDX1 (235 aa).

Residue Lys-16 is the Schiff-base intermediate with D-ribose 5-phosphate of the active site. Arg-104 serves as a coordination point for D-glyceraldehyde 3-phosphate. D-ribose 5-phosphate-binding positions include Gly-153 and 174–175 (GS).

It belongs to the PdxS/SNZ family.

The catalysed reaction is aldehydo-D-ribose 5-phosphate + D-glyceraldehyde 3-phosphate + L-glutamine = pyridoxal 5'-phosphate + L-glutamate + phosphate + 3 H2O + H(+). Its pathway is cofactor biosynthesis; pyridoxal 5'-phosphate biosynthesis. Its function is as follows. Catalyzes the formation of pyridoxal 5'-phosphate from ribose 5-phosphate (RBP), glyceraldehyde 3-phosphate (G3P) and ammonia. The ammonia is provided by PDX2. Can also use ribulose 5-phosphate and dihydroxyacetone phosphate as substrates, resulting from enzyme-catalyzed isomerization of RBP and G3P, respectively. Also plays an indirect role in resistance to singlet oxygen-generating photosensitizers. This chain is Probable pyridoxal 5'-phosphate synthase subunit PDX1, found in Stellaria longipes (Longstalk starwort).